The sequence spans 418 residues: Pyruvate decarboxylase 1 (418 aa).

His59 is a substrate binding site. The segment at 337–418 is thiamine pyrophosphate binding; that stretch reads DSWFNCQKLK…IFLINNGGYT (82 aa). The Mg(2+) site is built by Asp387, Asn414, and Gly416.

This sequence belongs to the TPP enzyme family. Homotetramer. It depends on a metal cation as a cofactor. Thiamine diphosphate serves as cofactor. Leaves.

The enzyme catalyses a 2-oxocarboxylate + H(+) = an aldehyde + CO2. The protein is Pyruvate decarboxylase 1 (PDC1) of Nicotiana tabacum (Common tobacco).